A 60-amino-acid chain; its full sequence is Large ribosomal subunit protein uL30 (60 aa).

It belongs to the universal ribosomal protein uL30 family. Part of the 50S ribosomal subunit.

The polypeptide is Large ribosomal subunit protein uL30 (Desulfitobacterium hafniense (strain DSM 10664 / DCB-2)).